The sequence spans 141 residues: Large ribosomal subunit protein uL11 (141 aa).

The protein belongs to the universal ribosomal protein uL11 family. In terms of assembly, part of the ribosomal stalk of the 50S ribosomal subunit. Interacts with L10 and the large rRNA to form the base of the stalk. L10 forms an elongated spine to which L12 dimers bind in a sequential fashion forming a multimeric L10(L12)X complex. One or more lysine residues are methylated.

Forms part of the ribosomal stalk which helps the ribosome interact with GTP-bound translation factors. The chain is Large ribosomal subunit protein uL11 from Acetivibrio thermocellus (strain ATCC 27405 / DSM 1237 / JCM 9322 / NBRC 103400 / NCIMB 10682 / NRRL B-4536 / VPI 7372) (Clostridium thermocellum).